Reading from the N-terminus, the 230-residue chain is MSERAPVVTVDGPSGAGKGTISQLLAERLGYKLLDSGAIYRVLALAAIHHNVELDNEESLTLLAAHLDVQFVTGNEGKGIKVVLEGEDVSTTIRSQECSNAASKVAAFPRVREALLRRQRAFAEAPGLIADGRDMGTVVFPATPAKLYLTATAEERAQRRYNQLQDKGFDVNIDQLLSEIKERDDRDMNRSVAPLVPAEDALIIDTTNINIEDVLDLALTHIHQKLQVPA.

12-20 (GPSGAGKGT) contacts ATP.

This sequence belongs to the cytidylate kinase family. Type 1 subfamily.

It localises to the cytoplasm. It catalyses the reaction CMP + ATP = CDP + ADP. The enzyme catalyses dCMP + ATP = dCDP + ADP. The sequence is that of Cytidylate kinase from Shewanella halifaxensis (strain HAW-EB4).